Reading from the N-terminus, the 93-residue chain is MKMPKKIMTYCPYCKKHTSHSVERVRKRKASELKAGQRRFRRVTSGYGGFPRPKFEGREKPTKRIALRLVCDECHKAITPPGIRAKKFEIVEA.

Zn(2+) is bound by residues Cys11, Cys14, Cys71, and Cys74. A C4-type zinc finger spans residues 11 to 74 (CPYCKKHTSH…IALRLVCDEC (64 aa)).

It belongs to the eukaryotic ribosomal protein eL42 family. In terms of assembly, part of the 50S ribosomal subunit. Requires Zn(2+) as cofactor.

Functionally, binds to the 23S rRNA. This Thermoplasma acidophilum (strain ATCC 25905 / DSM 1728 / JCM 9062 / NBRC 15155 / AMRC-C165) protein is Large ribosomal subunit protein eL42.